Here is a 435-residue protein sequence, read N- to C-terminus: Hexane cyclase xenF (435 aa).

An N-terminal signal peptide occupies residues 1-23 (MSPAANMFRTLTLTALVSAVVSA). N-linked (GlcNAc...) asparagine glycans are attached at residues Asn81 and Asn156.

The protein belongs to the Diels-Alderase family.

It participates in mycotoxin biosynthesis. Functionally, hexane cyclase; part of the gene cluster that mediates the biosynthesis of xenoacremones such as xenoacremone A, a compound that shows inhibitory activity toward the PI3K/AKT signaling pathway and which has the ability to induce apoptosis of A549 lung cancer cells. Within the pathway, cooperation of the hybrid PKS-NRPS xenE and the trans-acting enoyl reductase xenG is responsible for the formation of the reduced tyrosine-nonaketide derivative. The alpha/beta hydrolase xenA then accelerates intramolecular nucleophilic attack to give a pyrrolidone derivative. Subsequently, three enzymes, xenF, xenD, and xenC, coordinately participate in the conversion to xenoacremone B. XenF catalyzes sigmatropic rearrangement to form an A-ring, which leads to an unusual intermediate with a hexane ring, which is required for the formation of the tricarbocyclic product. Epoxidation catalyzed by xenD and the formation of the paracyclophane ether catalyzed by xenC initiate a spontaneous intramolecular Diels-Alder (IMDA) reaction to yield xenoacremone B. Spontaneous hydration of xenoacremone B leads to the formation of xenoacremone A, which undergoes subsequent methylation to afford xenoacremone C. The chain is Hexane cyclase xenF from Xenoacremonium sinensis (Endophyte fungus).